Here is a 590-residue protein sequence, read N- to C-terminus: Aspartate--tRNA(Asp/Asn) ligase (590 aa).

Glu175 is a binding site for L-aspartate. The tract at residues 199–202 is aspartate; the sequence is QQYK. L-aspartate-binding residues include Arg221 and His450. Position 221 to 223 (221 to 223) interacts with ATP; sequence RDE. Glu484 provides a ligand contact to ATP. An L-aspartate-binding site is contributed by Arg491. ATP is bound at residue 536 to 539; sequence GVDR.

This sequence belongs to the class-II aminoacyl-tRNA synthetase family. Type 1 subfamily. As to quaternary structure, homodimer.

It is found in the cytoplasm. It carries out the reaction tRNA(Asx) + L-aspartate + ATP = L-aspartyl-tRNA(Asx) + AMP + diphosphate. Its function is as follows. Aspartyl-tRNA synthetase with relaxed tRNA specificity since it is able to aspartylate not only its cognate tRNA(Asp) but also tRNA(Asn). Reaction proceeds in two steps: L-aspartate is first activated by ATP to form Asp-AMP and then transferred to the acceptor end of tRNA(Asp/Asn). The sequence is that of Aspartate--tRNA(Asp/Asn) ligase from Rhodopseudomonas palustris (strain BisB5).